The sequence spans 1482 residues: MQRSPLEKASVFSKLFFSWTRPILRKGYRQRLELSDIYQIPSADSADNLSEKLEREWDRELASKKNPKLINALRRCFFWRFMFYGILLYLGEVTKAVQPLLLGRIIASYDPDNKVERSIAIYLGIGLCLLFIVRTLLLHPAIFGLHHIGMQMRIAMFSLIYKKILKLSSRVLDKISIGQLVSLLSNNLNKFDEGLALAHFVWIAPLQVTLLMGLLWELLQASAFCGLGFLIVLALVQAGLGRMMMKYRDQRAGKINERLVITSEMIENIQSVKAYCWEEAMEKMIENLRQTELKLTRKAAYVRYFNSSAFFFSGFFVVFLSVLPYALIKGIILRKIFTTISFCIVLRMAVTRQFPWAVQTWYDSLGAINKIQDFLQKQEYKTLEYNLTTTEVVMENVTAFWEEGIGELFEKAKQNNDNRKISNGDNSLFFSNLALLGAPVLKDINFKIERGQLLAVAGSTGAGKTSLLMMIMGELEPSEGKIKHSGRISFCSQFSWIMPGTIKENIIFGVSYDEYRYRSVIKACQLEEDISKFAEKDNIVLGEGGITLSGGQRARISLARAVYKDADLYLLDSPFGYLDVLTEKEIFESCVCKLMANKTRILVTSKMEHLKKADKILILHEGSSYFYGTFSELQNLRPDFSSKLMGFDSFDQFSAERRNSILTETLRRFSLEGDAAVSRNETKKQSFKQTGEIGEKRKNSILNPINSIRKFSVVQKTPLPMNGIDEEDSEEPVERRLSLVPDSEQGEAILPRSNVFNTGPTFQGRRRQSVLNLMTHSVNQGQNIHRKTAASTRKMSLAPQANLTEMDIYSRRLSQESSLEISEEINEEYLKECFCDDVENIPAVTTWNTYLRYLAVNKSLSLVLIWCLVIFLAEVAISLAVLLLLDKSPRYSKGNGTASGNGSSAVIITSTSSYYLFYIYVGVADTLLALGFFRGLPLVHTLITVSKILHHRMLHSVLRAPMSTLNMLKAGGILNRFSKDIAILDDLLPLTIFDFVQLLLIVIGAVAVVSVLQPYIFLATVPVIAAFVILRGYFLHTSQQLKQLESEGRSPIFTHLVTSLKGLWTLRAFGRQPYFETLFHKALNLHTANWFLYLSTLRWFQMRIEMIFVVFFIAVTFISILTTGEGEGTVGIILTLAMNIMGTLQWAVNSSIDVDSLMRSVSRVFKFIDMPTEEGRSTKSIKPSKDCQLSKVMIFENLHVKKDDIWPSGGQMTVKDLTARYIDSGNAILENISFSISPGQRVGLLGRTGAGKSTLLSAFLRLLNTEGDIQIDGVSWDSITLQQWRKAFGVIPQKVFIFSGTFRKNLDPYEQWSDQEIWKVADEVGLRSVIEQFPGKLDFVLVDGGYVLSHGHKQLMCLARSVLSKAKILLLDEPSAHLDPITYQIIRRTLKQAFADCTVILCEHRIEAMLECQRFLVIEENKVRQYDSIQKLLSEKSLFRQAISPSDRMKLFPRRNSSKHKSRSPITALKEETEEEVQETRL.

Residues 1-77 lie on the Cytoplasmic side of the membrane; that stretch reads MQRSPLEKAS…KLINALRRCF (77 aa). Residues 78-98 traverse the membrane as a helical segment; sequence FWRFMFYGILLYLGEVTKAVQ. An ABC transmembrane type-1 1 domain is found at 81–365; sequence FMFYGILLYL…WAVQTWYDSL (285 aa). The Extracellular segment spans residues 99–122; it reads PLLLGRIIASYDPDNKVERSIAIY. Residues 123–146 traverse the membrane as a helical segment; that stretch reads LGIGLCLLFIVRTLLLHPAIFGLH. The Cytoplasmic segment spans residues 147–195; sequence HIGMQMRIAMFSLIYKKILKLSSRVLDKISIGQLVSLLSNNLNKFDEGL. Residues 196 to 216 traverse the membrane as a helical segment; that stretch reads ALAHFVWIAPLQVTLLMGLLW. Topologically, residues 217–222 are extracellular; sequence ELLQAS. Residues 223 to 243 traverse the membrane as a helical segment; the sequence is AFCGLGFLIVLALVQAGLGRM. At 244 to 298 the chain is on the cytoplasmic side; sequence MMKYRDQRAGKINERLVITSEMIENIQSVKAYCWEEAMEKMIENLRQTELKLTRK. The helical transmembrane segment at 299–319 threads the bilayer; sequence AAYVRYFNSSAFFFSGFFVVF. Residues 320–339 are Extracellular-facing; sequence LSVLPYALIKGIILRKIFTT. The helical transmembrane segment at 340–358 threads the bilayer; that stretch reads ISFCIVLRMAVTRQFPWAV. Over 359–859 the chain is Cytoplasmic; it reads QTWYDSLGAI…YLRYLAVNKS (501 aa). ATP contacts are provided by residues W401, 458–465, and Q493; that span reads GSTGAGKT. The 224-residue stretch at 423–646 folds into the ABC transporter 1 domain; the sequence is NGDNSLFFSN…RPDFSSKLMG (224 aa). C524 carries the S-palmitoyl cysteine lipid modification. S549 and S660 each carry phosphoserine. Residues 654-832 form a disordered R region region; it reads SAERRNSILT…EEINEEYLKE (179 aa). Position 670 is a phosphoserine; by PKA (S670). S686 carries the post-translational modification Phosphoserine. Residue K688 forms a Glycyl lysine isopeptide (Lys-Gly) (interchain with G-Cter in ubiquitin) linkage. Phosphoserine is present on residues S700 and S712. The residue at position 717 (T717) is a Phosphothreonine. Residues S738, S769, S791, S796, and S814 each carry the phosphoserine modification. The helical transmembrane segment at 860 to 880 threads the bilayer; sequence LSLVLIWCLVIFLAEVAISLA. The region spanning 860–1156 is the ABC transmembrane type-1 2 domain; that stretch reads LSLVLIWCLV…AVNSSIDVDS (297 aa). Residues 881 to 919 lie on the Extracellular side of the membrane; the sequence is VLLLLDKSPRYSKGNGTASGNGSSAVIITSTSSYYLFYI. N895 and N901 each carry an N-linked (GlcNAc...) asparagine glycan. Residues 920–940 traverse the membrane as a discontinuously helical segment; the sequence is YVGVADTLLALGFFRGLPLVH. The Cytoplasmic portion of the chain corresponds to 941-991; it reads TLITVSKILHHRMLHSVLRAPMSTLNMLKAGGILNRFSKDIAILDDLLPLT. Residues 992–1012 traverse the membrane as a helical segment; that stretch reads IFDFVQLLLIVIGAVAVVSVL. Residues 1013–1014 lie on the Extracellular side of the membrane; sequence QP. Residues 1015 to 1035 form a helical membrane-spanning segment; that stretch reads YIFLATVPVIAAFVILRGYFL. The Cytoplasmic portion of the chain corresponds to 1036 to 1096; that stretch reads HTSQQLKQLE…TANWFLYLST (61 aa). A helical transmembrane segment spans residues 1097-1117; the sequence is LRWFQMRIEMIFVVFFIAVTF. Topologically, residues 1118–1131 are extracellular; the sequence is ISILTTGEGEGTVG. Residues 1132–1152 traverse the membrane as a helical segment; sequence IILTLAMNIMGTLQWAVNSSI. Residues 1153–1482 lie on the Cytoplasmic side of the membrane; it reads DVDSLMRSVS…TEEEVQETRL (330 aa). In terms of domain architecture, ABC transporter 2 spans 1212 to 1445; sequence MTVKDLTARY…KSLFRQAISP (234 aa). ATP is bound by residues Y1221 and 1246-1253; that span reads GRTGAGKS. The interaction with GORASP2 stretch occupies residues 1388-1482; the sequence is RTLKQAFADC…TEEEVQETRL (95 aa). C1397 carries the S-palmitoyl cysteine lipid modification. S1446 and S1458 each carry phosphoserine. Residues 1450 to 1482 are disordered; it reads KLFPRRNSSKHKSRSPITALKEETEEEVQETRL. Basic residues predominate over residues 1451-1463; sequence LFPRRNSSKHKSR. Over residues 1472-1482 the composition is skewed to acidic residues; the sequence is ETEEEVQETRL. Residues 1480–1482 carry the PDZ-binding motif; sequence TRL.

It belongs to the ABC transporter superfamily. ABCC family. CFTR transporter (TC 3.A.1.202) subfamily. In terms of assembly, monomer; does not require oligomerization for channel activity. May form oligomers in the membrane. Interacts with SLC26A3, SLC26A6 and NHERF1. Interacts with SHANK2. Interacts with MYO6. Interacts (via C-terminus) with GOPC (via PDZ domain); this promotes CFTR internalization and thereby decreases channel activity. Interacts with SLC4A7 through NHERF1. Found in a complex with MYO5B and RAB11A. Interacts with ANO1. Interacts with SLC26A8. Interacts with AHCYL1; the interaction increases CFTR activity. Interacts with CSE1L. The core-glycosylated form interacts with GORASP2 (via PDZ GRASP-type 1 domain) in respone to ER stress. Interacts with MARCHF2; the interaction leads to CFTR ubiqtuitination and degradation. Interacts with ADGRG2. In terms of processing, N-glycosylated. Phosphorylated; cAMP treatment promotes phosphorylation and activates the channel. Dephosphorylation decreases the ATPase activity (in vitro). Phosphorylation at PKA sites activates the channel. Phosphorylation at PKC sites enhances the response to phosphorylation by PKA. Phosphorylated by AMPK; this inhibits channel activity. Post-translationally, ubiquitinated, leading to its degradation in the lysosome. Deubiquitination by USP10 in early endosomes enhances its endocytic recycling to the cell membrane. Ubiquitinated by RNF185 during ER stress. Ubiquitinated by MARCHF2.

Its subcellular location is the apical cell membrane. The protein localises to the early endosome membrane. It is found in the cell membrane. It localises to the recycling endosome membrane. The protein resides in the endoplasmic reticulum membrane. Its subcellular location is the nucleus. The enzyme catalyses ATP + H2O + closed Cl(-) channel = ADP + phosphate + open Cl(-) channel.. It catalyses the reaction chloride(in) = chloride(out). The catalysed reaction is hydrogencarbonate(in) = hydrogencarbonate(out). It carries out the reaction ATP + H2O = ADP + phosphate + H(+). Functionally, epithelial ion channel that plays an important role in the regulation of epithelial ion and water transport and fluid homeostasis. Mediates the transport of chloride ions across the cell membrane. Possesses an intrinsic ATPase activity and utilizes ATP to gate its channel; the passive flow of anions through the channel is gated by cycles of ATP binding and hydrolysis by the ATP-binding domains. The ion channel is also permeable to HCO(3)(-); selectivity depends on the extracellular chloride concentration. Exerts its function also by modulating the activity of other ion channels and transporters. Contributes to the regulation of the pH and the ion content of the epithelial fluid layer. Modulates the activity of the epithelial sodium channel (ENaC) complex, in part by regulating the cell surface expression of the ENaC complex. May regulate bicarbonate secretion and salvage in epithelial cells by regulating the transporter SLC4A7. Can inhibit the chloride channel activity of ANO1. Plays a role in the chloride and bicarbonate homeostasis during sperm epididymal maturation and capacitation. This is Cystic fibrosis transmembrane conductance regulator from Otolemur garnettii (Small-eared galago).